The sequence spans 111 residues: Nucleoid-associated protein Cpar_0834 (111 aa).

The protein belongs to the YbaB/EbfC family. Homodimer.

It localises to the cytoplasm. Its subcellular location is the nucleoid. Its function is as follows. Binds to DNA and alters its conformation. May be involved in regulation of gene expression, nucleoid organization and DNA protection. The chain is Nucleoid-associated protein Cpar_0834 from Chlorobaculum parvum (strain DSM 263 / NCIMB 8327) (Chlorobium vibrioforme subsp. thiosulfatophilum).